The sequence spans 370 residues: Aspartate beta-hydroxylase domain-containing protein 2 (370 aa).

At 1 to 57 (MVWALPRTSSPSCIAPSYKPDSGWIKMSAEWLIDWSCLLNGLRDLIAGCIQAVRDCN) the chain is on the cytoplasmic side. Residues 58 to 78 (SFALTTVICLLMLFAWYCYRV) form a helical membrane-spanning segment. The Lumenal portion of the chain corresponds to 79–370 (GKDQPRSPFA…ALDSIFAPGR (292 aa)). The N-linked (GlcNAc...) asparagine glycan is linked to Asn-212. Residues Trp-229 and Ser-273 each coordinate 2-oxoglutarate. Residue His-284 coordinates Fe cation. 293–295 (RCH) lines the 2-oxoglutarate pocket. Residue His-329 coordinates Fe cation. 2-oxoglutarate is bound at residue Arg-342.

It belongs to the aspartyl/asparaginyl beta-hydroxylase family. It depends on Fe cation as a cofactor.

It is found in the membrane. In terms of biological role, may function as 2-oxoglutarate-dependent dioxygenase. This is Aspartate beta-hydroxylase domain-containing protein 2 (asphd2) from Xenopus tropicalis (Western clawed frog).